A 158-amino-acid polypeptide reads, in one-letter code: Cytochrome c-type biogenesis protein CcmE (158 aa).

Residues 1-11 are compositionally biased toward polar residues; sequence MTRPDSGSSPA. Positions 1–20 are disordered; it reads MTRPDSGSSPAPLSEARRRK. The Cytoplasmic portion of the chain corresponds to 1 to 23; sequence MTRPDSGSSPAPLSEARRRKRNP. Residues 24–44 traverse the membrane as a helical; Signal-anchor for type II membrane protein segment; it reads LPTVLGITALLGLAGFIAFGN. The Extracellular portion of the chain corresponds to 45-158; sequence LNKSLEYFVT…ELRDLLEQSE (114 aa). 2 residues coordinate heme: His137 and Tyr141.

This sequence belongs to the CcmE/CycJ family.

It is found in the cell membrane. In terms of biological role, heme chaperone required for the biogenesis of c-type cytochromes. Transiently binds heme delivered by CcmC and transfers the heme to apo-cytochromes in a process facilitated by CcmF and CcmH. The sequence is that of Cytochrome c-type biogenesis protein CcmE from Deinococcus deserti (strain DSM 17065 / CIP 109153 / LMG 22923 / VCD115).